Here is a 514-residue protein sequence, read N- to C-terminus: Cytochrome P450 94A1 (514 aa).

A helical membrane pass occupies residues 7-29; that stretch reads EVLLPYLLPLLLLILPTTIFFLT. Heme is bound at residue cysteine 458.

It belongs to the cytochrome P450 family. The cofactor is heme.

It is found in the endoplasmic reticulum membrane. Functionally, catalyzes the omega-hydroxylation of various fatty acids (FA) from 10 to 18 carbon atoms. The substrate specificity is higher for laurate &gt; palmitate &gt; myristate &gt; linolenate &gt; linoleate &gt; oleate &gt; caprate. May play a minor role in cutin synthesis and could be involved in plant defense. The chain is Cytochrome P450 94A1 (CYP94A1) from Vicia sativa (Spring vetch).